We begin with the raw amino-acid sequence, 117 residues long: Snaclec CHH-B subunit beta (117 aa).

Cystine bridges form between Cys2/Cys13, Cys30/Cys115, and Cys92/Cys107. Residues 9 to 116 (YEGHCYRVFQ…CSKTHNVVCK (108 aa)) enclose the C-type lectin domain.

It belongs to the snaclec family. Heterodimer of subunits alpha and beta; disulfide-linked. In terms of tissue distribution, expressed by the venom gland.

Its subcellular location is the secreted. In terms of biological role, binds to the subunit GPIbalpha (GP1BA) of the platelet GPIb/V/IX receptor system. It inhibits ristocetin- and vWF-induced platelet aggregation in platelet-rich plasma by inhibiting the binding of vWF to GPIbalpha. The sequence is that of Snaclec CHH-B subunit beta from Crotalus horridus (Timber rattlesnake).